The primary structure comprises 240 residues: Cytochrome c-551 (240 aa).

Positions 41, 44, 45, 128, 132, and 133 each coordinate heme c.

Binds 2 heme c groups per subunit.

In Rhodocyclus tenuis (Rhodospirillum tenue), this protein is Cytochrome c-551.